Reading from the N-terminus, the 316-residue chain is 4-hydroxy-3-methylbut-2-enyl diphosphate reductase (316 aa).

Cys12 is a binding site for [4Fe-4S] cluster. Residues His41 and His74 each coordinate (2E)-4-hydroxy-3-methylbut-2-enyl diphosphate. Dimethylallyl diphosphate is bound by residues His41 and His74. Residues His41 and His74 each coordinate isopentenyl diphosphate. Cys96 serves as a coordination point for [4Fe-4S] cluster. His124 provides a ligand contact to (2E)-4-hydroxy-3-methylbut-2-enyl diphosphate. His124 is a dimethylallyl diphosphate binding site. An isopentenyl diphosphate-binding site is contributed by His124. Glu126 (proton donor) is an active-site residue. A (2E)-4-hydroxy-3-methylbut-2-enyl diphosphate-binding site is contributed by Thr167. Residue Cys197 coordinates [4Fe-4S] cluster. Positions 225, 226, 227, and 269 each coordinate (2E)-4-hydroxy-3-methylbut-2-enyl diphosphate. Residues Ser225, Ser226, Asn227, and Ser269 each contribute to the dimethylallyl diphosphate site. Isopentenyl diphosphate is bound by residues Ser225, Ser226, Asn227, and Ser269.

It belongs to the IspH family. As to quaternary structure, homodimer. Requires [4Fe-4S] cluster as cofactor.

The catalysed reaction is isopentenyl diphosphate + 2 oxidized [2Fe-2S]-[ferredoxin] + H2O = (2E)-4-hydroxy-3-methylbut-2-enyl diphosphate + 2 reduced [2Fe-2S]-[ferredoxin] + 2 H(+). It carries out the reaction dimethylallyl diphosphate + 2 oxidized [2Fe-2S]-[ferredoxin] + H2O = (2E)-4-hydroxy-3-methylbut-2-enyl diphosphate + 2 reduced [2Fe-2S]-[ferredoxin] + 2 H(+). The protein operates within isoprenoid biosynthesis; dimethylallyl diphosphate biosynthesis; dimethylallyl diphosphate from (2E)-4-hydroxy-3-methylbutenyl diphosphate: step 1/1. It participates in isoprenoid biosynthesis; isopentenyl diphosphate biosynthesis via DXP pathway; isopentenyl diphosphate from 1-deoxy-D-xylulose 5-phosphate: step 6/6. Catalyzes the conversion of 1-hydroxy-2-methyl-2-(E)-butenyl 4-diphosphate (HMBPP) into a mixture of isopentenyl diphosphate (IPP) and dimethylallyl diphosphate (DMAPP). Acts in the terminal step of the DOXP/MEP pathway for isoprenoid precursor biosynthesis. The protein is 4-hydroxy-3-methylbut-2-enyl diphosphate reductase of Salmonella paratyphi B (strain ATCC BAA-1250 / SPB7).